We begin with the raw amino-acid sequence, 293 residues long: Aromatic amino acid exporter YddG (293 aa).

The Cytoplasmic segment spans residues 1–6 (MTRQKA). Positions 6–137 (ATLIGLIAIV…LALVGVCWVL (132 aa)) constitute an EamA 1 domain. Residues 7–27 (TLIGLIAIVLWSTMVGLIRGV) traverse the membrane as a helical segment. Over 28-33 (SEGLGP) the chain is Periplasmic. The chain crosses the membrane as a helical span at residues 34-54 (VGGAAAIYSLSGLLLIFTVGF). Residues 55 to 62 (PRIRQIPK) lie on the Cytoplasmic side of the membrane. The chain crosses the membrane as a helical span at residues 63–83 (GYLLAGSLLFVSYEICLALSL). Residues 84-92 (GYAATHHQA) are Periplasmic-facing. The chain crosses the membrane as a helical span at residues 93–113 (IEVGMVNYLWPSLTILFAILF). The Cytoplasmic portion of the chain corresponds to 114 to 118 (NGQKT). The chain crosses the membrane as a helical span at residues 119-139 (NWLIVPGLLLALVGVCWVLGG). At 140–155 (DNGLHYDEIINNITTS) the chain is on the periplasmic side. A helical transmembrane segment spans residues 156–176 (PLSYFLAFIGAFIWAAYCTVT). The EamA 2 domain occupies 158–285 (SYFLAFIGAF…ALMVCGGSLL (128 aa)). The Cytoplasmic portion of the chain corresponds to 177–182 (NKYARG). The chain crosses the membrane as a helical span at residues 183–203 (FNGITVFVLLTGASLWVYYFL). At 204 to 218 (TPQPEMIFSTPVMIK) the chain is on the periplasmic side. Residues 219-239 (LISAAFTLGFAYAAWNVGILH) traverse the membrane as a helical segment. At 240 to 243 (GNVT) the chain is on the cytoplasmic side. Residues 244 to 264 (IMAVGSYFTPVLSSALAAVLL) form a helical membrane-spanning segment. Residues 265–267 (SAP) lie on the Periplasmic side of the membrane. A helical transmembrane segment spans residues 268–288 (LSFSFWQGALMVCGGSLLCWL). Over 289 to 293 (ATRRG) the chain is Cytoplasmic.

This sequence belongs to the drug/metabolite transporter (DMT) superfamily. Aromatic amino acid/paraquat exporter (ArAA/P-E) (TC 2.A.7.17) family.

The protein localises to the cell inner membrane. It carries out the reaction L-phenylalanine(in) = L-phenylalanine(out). It catalyses the reaction L-tyrosine(in) = L-tyrosine(out). The enzyme catalyses L-tryptophan(in) = L-tryptophan(out). The catalysed reaction is L-threonine(in) = L-threonine(out). It carries out the reaction L-methionine(in) = L-methionine(out). It catalyses the reaction L-lysine(in) = L-lysine(out). The enzyme catalyses L-glutamate(out) = L-glutamate(in). The catalysed reaction is L-valine(in) = L-valine(out). It carries out the reaction L-isoleucine(in) = L-isoleucine(out). Functionally, amino acid transporter with broad substrate specificity. Can transport various amino acids, including phenylalanine, tyrosine, tryptophan, L-threonine, L-methionine, L-lysine, L-glutamate, L-valine and L-isoleucine. Overexpression confers resistance to phenylalanine and increases export of phenylalanine, tyrosine and tryptophan. This Escherichia coli (strain K12) protein is Aromatic amino acid exporter YddG (yddG).